We begin with the raw amino-acid sequence, 422 residues long: Acylglycerol kinase, mitochondrial (422 aa).

Lys6 carries the post-translational modification N6-acetyllysine. Residues Thr15 to Gly31 are hydrophobic. The region spanning Ala58–Lys199 is the DAGKc domain. The tract at residues Gln249–Gln271 is disordered.

This sequence belongs to the AGK family. As to quaternary structure, component of the TIM22 complex, which core is composed of TIMM22, associated with TIMM10 (TIMM10A and/or TIMM10B), TIMM9, AGK and TIMM29. Interacts with SMIM26. Mg(2+) serves as cofactor. In terms of tissue distribution, highly expressed in muscle, heart, kidney and brain.

It is found in the mitochondrion inner membrane. Its subcellular location is the mitochondrion intermembrane space. The catalysed reaction is a monoacylglycerol + ATP = a monoacyl-sn-glycero-3-phosphate + ADP + H(+). The enzyme catalyses a 1,2-diacyl-sn-glycerol + ATP = a 1,2-diacyl-sn-glycero-3-phosphate + ADP + H(+). It catalyses the reaction an N-acylsphing-4-enine + ATP = an N-acylsphing-4-enine 1-phosphate + ADP + H(+). It carries out the reaction 1-(9Z-octadecenoyl)-sn-glycerol + ATP = 1-(9Z-octadecenoyl)-sn-glycero-3-phosphate + ADP + H(+). The catalysed reaction is 1,2-di-(9Z-octadecenoyl)-sn-glycerol + ATP = 1,2-di-(9Z-octadecenoyl)-sn-glycero-3-phosphate + ADP + H(+). The enzyme catalyses a 1-acyl-sn-glycerol + ATP = a 1-acyl-sn-glycero-3-phosphate + ADP + H(+). It catalyses the reaction 1-hexadecanoyl-sn-glycerol + ATP = 1-hexadecanoyl-sn-glycero-3-phosphate + ADP + H(+). It carries out the reaction a 2-acylglycerol + ATP = a 2-acyl-sn-glycerol 3-phosphate + ADP + H(+). The catalysed reaction is 2-(5Z,8Z,11Z,14Z-eicosatetraenoyl)-glycerol + ATP = 2-(5Z,8Z,11Z,14Z-eicosatetraenoyl)-sn-glycero-3-phosphate + ADP + H(+). The enzyme catalyses 1-(5Z,8Z,11Z,14Z-eicosatetraenoyl)-sn-glycerol + ATP = 1-(5Z,8Z,11Z,14Z-eicosatetraenoyl)-sn-glycero-3-phosphate + ADP + H(+). It catalyses the reaction N-(hexanoyl)sphing-4-enine + ATP = N-hexanoylsphing-4-enine 1-phosphate + ADP + H(+). Its pathway is lipid metabolism; glycerolipid metabolism. Functionally, lipid kinase that can phosphorylate both monoacylglycerol and diacylglycerol to form lysophosphatidic acid (LPA) and phosphatidic acid (PA), respectively. Does not phosphorylate sphingosine. Phosphorylates ceramide. Phosphorylates 1,2-dioleoylglycerol more rapidly than 2,3-dioleoylglycerol. Independently of its lipid kinase activity, acts as a component of the TIM22 complex. The TIM22 complex mediates the import and insertion of multi-pass transmembrane proteins into the mitochondrial inner membrane by forming a twin-pore translocase that uses the membrane potential as the external driving force. In the TIM22 complex, required for the import of a subset of metabolite carriers into mitochondria, such as ANT1/SLC25A4 and SLC25A24, while it is not required for the import of TIMM23. Overexpression increases the formation and secretion of LPA, resulting in transactivation of EGFR and activation of the downstream MAPK signaling pathway, leading to increased cell growth. The chain is Acylglycerol kinase, mitochondrial from Homo sapiens (Human).